The sequence spans 274 residues: Hematopoietically-expressed homeobox protein hhex (274 aa).

The homeobox DNA-binding region spans Arg-139–Lys-198. The tract at residues Leu-197–His-274 is disordered. The span at Asp-237 to Thr-248 shows a compositional bias: polar residues. Residues Leu-249–Ile-263 show a composition bias toward acidic residues.

In terms of tissue distribution, expressed in the most dorsoanterior endomesoderm of the blastula and gastrula embryo, and later is restricted to the forming liver diverticulum.

It is found in the nucleus. Recognizes the DNA sequence 5'-ATTAA-3'. Transcriptional repressor. Regulates the differentiation of both endothelial and blood cells. Probably plays a role in the proliferation of vascular endothelial cells during blood vessel development. Establishes anterior identity at two levels; acts early to enhance canonical wnt-signaling by repressing expression of tle4, and acts later to inhibit nodal-signaling by directly targeting nodal/nr1 and nodal2/nr2. May play a role in liver development. Induces heart development. This Xenopus tropicalis (Western clawed frog) protein is Hematopoietically-expressed homeobox protein hhex.